A 394-amino-acid chain; its full sequence is S-adenosylmethionine synthase (394 aa).

Residue His-15 participates in ATP binding. Asp-17 serves as a coordination point for Mg(2+). A K(+)-binding site is contributed by Glu-43. L-methionine is bound by residues Glu-56 and Gln-99. The interval 99 to 109 (QSPDIALGVNK) is flexible loop. ATP contacts are provided by residues 173–175 (DGK), 239–240 (RF), Asp-248, 254–255 (RK), Ala-271, and Lys-275. L-methionine is bound at residue Asp-248. An L-methionine-binding site is contributed by Lys-279.

This sequence belongs to the AdoMet synthase family. As to quaternary structure, homotetramer; dimer of dimers. It depends on Mg(2+) as a cofactor. The cofactor is K(+).

It is found in the cytoplasm. It catalyses the reaction L-methionine + ATP + H2O = S-adenosyl-L-methionine + phosphate + diphosphate. It functions in the pathway amino-acid biosynthesis; S-adenosyl-L-methionine biosynthesis; S-adenosyl-L-methionine from L-methionine: step 1/1. Its function is as follows. Catalyzes the formation of S-adenosylmethionine (AdoMet) from methionine and ATP. The overall synthetic reaction is composed of two sequential steps, AdoMet formation and the subsequent tripolyphosphate hydrolysis which occurs prior to release of AdoMet from the enzyme. The polypeptide is S-adenosylmethionine synthase (Kosmotoga olearia (strain ATCC BAA-1733 / DSM 21960 / TBF 19.5.1)).